The primary structure comprises 131 residues: Putative superoxide reductase (131 aa).

Fe cation contacts are provided by Glu15, His17, His45, His51, Cys115, and His118.

This sequence belongs to the desulfoferrodoxin family. It depends on Fe cation as a cofactor.

It carries out the reaction reduced [rubredoxin] + superoxide + 2 H(+) = oxidized [rubredoxin] + H2O2. In terms of biological role, uses electrons from reduced NADP, by way of rubredoxin and an oxidoreductase, to catalyze the reduction of superoxide to hydrogen peroxide. The chain is Putative superoxide reductase from Thermotoga maritima (strain ATCC 43589 / DSM 3109 / JCM 10099 / NBRC 100826 / MSB8).